The chain runs to 284 residues: tRNA pseudouridine synthase B (284 aa).

The Nucleophile role is filled by Asp-40.

The protein belongs to the pseudouridine synthase TruB family. Type 1 subfamily.

The catalysed reaction is uridine(55) in tRNA = pseudouridine(55) in tRNA. Responsible for synthesis of pseudouridine from uracil-55 in the psi GC loop of transfer RNAs. The chain is tRNA pseudouridine synthase B from Helicobacter hepaticus (strain ATCC 51449 / 3B1).